The sequence spans 275 residues: Octanoyl-[GcvH]:protein N-octanoyltransferase (275 aa).

A BPL/LPL catalytic domain is found at 42–246; sequence GQSQPVVRLW…ALQAFGSRLE (205 aa). The Acyl-thioester intermediate role is filled by cysteine 145.

It belongs to the octanoyltransferase LipL family.

The enzyme catalyses N(6)-octanoyl-L-lysyl-[glycine-cleavage complex H protein] + L-lysyl-[lipoyl-carrier protein] = N(6)-octanoyl-L-lysyl-[lipoyl-carrier protein] + L-lysyl-[glycine-cleavage complex H protein]. It participates in protein modification; protein lipoylation via endogenous pathway; protein N(6)-(lipoyl)lysine from octanoyl-[acyl-carrier-protein]. Its function is as follows. Catalyzes the amidotransfer (transamidation) of the octanoyl moiety from octanoyl-GcvH to the lipoyl domain of the E2 subunit of lipoate-dependent enzymes. The chain is Octanoyl-[GcvH]:protein N-octanoyltransferase from Anoxybacillus flavithermus (strain DSM 21510 / WK1).